Reading from the N-terminus, the 255-residue chain is Ribonuclease HII (255 aa).

An RNase H type-2 domain is found at 72-255 (RLIAGVDEVG…KTFAPVQSFR (184 aa)). Positions 78, 79, and 170 each coordinate a divalent metal cation.

The protein belongs to the RNase HII family. Mn(2+) serves as cofactor. Mg(2+) is required as a cofactor.

It is found in the cytoplasm. It catalyses the reaction Endonucleolytic cleavage to 5'-phosphomonoester.. Endonuclease that specifically degrades the RNA of RNA-DNA hybrids. The sequence is that of Ribonuclease HII (rnhB) from Bacillus subtilis (strain 168).